A 158-amino-acid polypeptide reads, in one-letter code: 3-dehydroquinate dehydratase (158 aa).

Residue Tyr22 is the Proton acceptor of the active site. Substrate-binding residues include Asn74, His80, and Asp87. The active-site Proton donor is His100. Residues 101–102 and Arg111 contribute to the substrate site; that span reads IS.

It belongs to the type-II 3-dehydroquinase family. In terms of assembly, homododecamer.

It catalyses the reaction 3-dehydroquinate = 3-dehydroshikimate + H2O. It participates in metabolic intermediate biosynthesis; chorismate biosynthesis; chorismate from D-erythrose 4-phosphate and phosphoenolpyruvate: step 3/7. Catalyzes a trans-dehydration via an enolate intermediate. This is 3-dehydroquinate dehydratase from Helicobacter hepaticus (strain ATCC 51449 / 3B1).